Consider the following 488-residue polypeptide: Acetyl-coenzyme A carboxylase carboxyl transferase subunit beta, chloroplastic (488 aa).

Positions L221 to K488 constitute a CoA carboxyltransferase N-terminal domain. C225, C228, C244, and C247 together coordinate Zn(2+). The C4-type zinc-finger motif lies at C225 to C247.

Belongs to the AccD/PCCB family. Acetyl-CoA carboxylase is a heterohexamer composed of biotin carboxyl carrier protein, biotin carboxylase and 2 subunits each of ACCase subunit alpha and ACCase plastid-coded subunit beta (accD). Requires Zn(2+) as cofactor.

Its subcellular location is the plastid. The protein resides in the chloroplast stroma. It catalyses the reaction N(6)-carboxybiotinyl-L-lysyl-[protein] + acetyl-CoA = N(6)-biotinyl-L-lysyl-[protein] + malonyl-CoA. It functions in the pathway lipid metabolism; malonyl-CoA biosynthesis; malonyl-CoA from acetyl-CoA: step 1/1. Functionally, component of the acetyl coenzyme A carboxylase (ACC) complex. Biotin carboxylase (BC) catalyzes the carboxylation of biotin on its carrier protein (BCCP) and then the CO(2) group is transferred by the transcarboxylase to acetyl-CoA to form malonyl-CoA. The protein is Acetyl-coenzyme A carboxylase carboxyl transferase subunit beta, chloroplastic of Aethionema grandiflorum (Persian stone-cress).